Consider the following 400-residue polypeptide: PHD finger protein 24 (400 aa).

Glycine 2 is lipidated: N-myristoyl glycine. Residues 28 to 38 show a composition bias toward basic and acidic residues; sequence LRDRPSIRRTG. Residues 28–99 form a disordered region; sequence LRDRPSIRRT…PEEFDRTSRF (72 aa). Arginine 36 is subject to Omega-N-methylarginine. The residue at position 43 (serine 43) is a Phosphoserine. Threonine 47 bears the Phosphothreonine mark. The residue at position 51 (serine 51) is a Phosphoserine. Basic and acidic residues predominate over residues 78 to 97; it reads AWERLRDGRGVEPEEFDRTS. The segment at 129–190 adopts a PHD-type zinc-finger fold; that stretch reads NDEMCDVCEV…TGWSCHYCDN (62 aa).

The sequence is that of PHD finger protein 24 from Homo sapiens (Human).